The primary structure comprises 224 residues: Pyridoxine/pyridoxamine 5'-phosphate oxidase (224 aa).

Substrate contacts are provided by residues 14–17 and Lys-76; that span reads REHY. FMN contacts are provided by residues 71-76, 86-87, Arg-92, Lys-93, and Gln-115; these read RTVLMK and YT. Tyr-133, Arg-137, and Ser-141 together coordinate substrate. FMN is bound by residues 150-151 and Trp-196; that span reads QS. A substrate-binding site is contributed by 202-204; the sequence is RLH. Position 206 (Arg-206) interacts with FMN.

This sequence belongs to the pyridoxamine 5'-phosphate oxidase family. Homodimer. It depends on FMN as a cofactor.

It carries out the reaction pyridoxamine 5'-phosphate + O2 + H2O = pyridoxal 5'-phosphate + H2O2 + NH4(+). It catalyses the reaction pyridoxine 5'-phosphate + O2 = pyridoxal 5'-phosphate + H2O2. It participates in cofactor metabolism; pyridoxal 5'-phosphate salvage; pyridoxal 5'-phosphate from pyridoxamine 5'-phosphate: step 1/1. The protein operates within cofactor metabolism; pyridoxal 5'-phosphate salvage; pyridoxal 5'-phosphate from pyridoxine 5'-phosphate: step 1/1. In terms of biological role, catalyzes the oxidation of either pyridoxine 5'-phosphate (PNP) or pyridoxamine 5'-phosphate (PMP) into pyridoxal 5'-phosphate (PLP). This is Pyridoxine/pyridoxamine 5'-phosphate oxidase from Streptomyces avermitilis (strain ATCC 31267 / DSM 46492 / JCM 5070 / NBRC 14893 / NCIMB 12804 / NRRL 8165 / MA-4680).